Consider the following 396-residue polypeptide: Elongation factor Tu 2 (396 aa).

Positions 10 to 206 (KPHCNIGTIG…TVDAYIPQPD (197 aa)) constitute a tr-type G domain. Residues 19-26 (GHVDHGKT) form a G1 region. A GTP-binding site is contributed by 19 to 26 (GHVDHGKT). Thr26 is a binding site for Mg(2+). The interval 60-64 (GITIN) is G2. The G3 stretch occupies residues 81 to 84 (DCPG). GTP contacts are provided by residues 81–85 (DCPGH) and 136–139 (NKVD). Positions 136–139 (NKVD) are G4. The tract at residues 174–176 (SAK) is G5.

This sequence belongs to the TRAFAC class translation factor GTPase superfamily. Classic translation factor GTPase family. EF-Tu/EF-1A subfamily. As to quaternary structure, monomer.

The protein localises to the cytoplasm. The enzyme catalyses GTP + H2O = GDP + phosphate + H(+). Functionally, GTP hydrolase that promotes the GTP-dependent binding of aminoacyl-tRNA to the A-site of ribosomes during protein biosynthesis. The polypeptide is Elongation factor Tu 2 (Caulobacter sp. (strain K31)).